A 216-amino-acid chain; its full sequence is Fibroblast growth factor 17 (216 aa).

Residues 1 to 22 (MGAARLLPNLTLCLQLLILCCQ) form the signal peptide. Residue Asn-137 is glycosylated (N-linked (GlcNAc...) asparagine). Positions 195–216 (FEFVGSAPTRRTKRTRRPQSQT) are disordered. Residues 204 to 216 (RRTKRTRRPQSQT) show a composition bias toward basic residues.

It belongs to the heparin-binding growth factors family. As to quaternary structure, interacts with FGFR3 and FGFR4.

It is found in the secreted. Functionally, plays an important role in the regulation of embryonic development and as signaling molecule in the induction and patterning of the embryonic brain. Required for normal brain development. This Mus musculus (Mouse) protein is Fibroblast growth factor 17 (Fgf17).